A 485-amino-acid chain; its full sequence is Aspartyl/glutamyl-tRNA(Asn/Gln) amidotransferase subunit B (485 aa).

The protein belongs to the GatB/GatE family. GatB subfamily. Heterotrimer of A, B and C subunits.

It carries out the reaction L-glutamyl-tRNA(Gln) + L-glutamine + ATP + H2O = L-glutaminyl-tRNA(Gln) + L-glutamate + ADP + phosphate + H(+). It catalyses the reaction L-aspartyl-tRNA(Asn) + L-glutamine + ATP + H2O = L-asparaginyl-tRNA(Asn) + L-glutamate + ADP + phosphate + 2 H(+). Its function is as follows. Allows the formation of correctly charged Asn-tRNA(Asn) or Gln-tRNA(Gln) through the transamidation of misacylated Asp-tRNA(Asn) or Glu-tRNA(Gln) in organisms which lack either or both of asparaginyl-tRNA or glutaminyl-tRNA synthetases. The reaction takes place in the presence of glutamine and ATP through an activated phospho-Asp-tRNA(Asn) or phospho-Glu-tRNA(Gln). This Opitutus terrae (strain DSM 11246 / JCM 15787 / PB90-1) protein is Aspartyl/glutamyl-tRNA(Asn/Gln) amidotransferase subunit B.